Consider the following 404-residue polypeptide: Glucose-1-phosphate adenylyltransferase 2 (404 aa).

Residues Tyr97, Gly162, 177–178 (EK), and Ser195 contribute to the alpha-D-glucose 1-phosphate site.

The protein belongs to the bacterial/plant glucose-1-phosphate adenylyltransferase family. Homotetramer.

The catalysed reaction is alpha-D-glucose 1-phosphate + ATP + H(+) = ADP-alpha-D-glucose + diphosphate. It functions in the pathway glycan biosynthesis; glycogen biosynthesis. Involved in the biosynthesis of ADP-glucose, a building block required for the elongation reactions to produce glycogen. Catalyzes the reaction between ATP and alpha-D-glucose 1-phosphate (G1P) to produce pyrophosphate and ADP-Glc. The sequence is that of Glucose-1-phosphate adenylyltransferase 2 from Vibrio vulnificus (strain YJ016).